The sequence spans 47 residues: Small ribosomal subunit protein uS14 (47 aa).

Positions 12, 15, 30, and 33 each coordinate Zn(2+).

The protein belongs to the universal ribosomal protein uS14 family. Zinc-binding uS14 subfamily. In terms of assembly, part of the 30S ribosomal subunit. It depends on Zn(2+) as a cofactor.

Its function is as follows. Binds 16S rRNA, required for the assembly of 30S particles. The polypeptide is Small ribosomal subunit protein uS14 (Methanosphaera stadtmanae (strain ATCC 43021 / DSM 3091 / JCM 11832 / MCB-3)).